Here is a 611-residue protein sequence, read N- to C-terminus: Probable potassium transport system protein Kup 1 (611 aa).

12 consecutive transmembrane segments (helical) span residues 6–26 (LMVG…LYTM), 44–64 (MLSL…VAVV), 90–110 (LGVI…GAIT), 129–149 (ISPY…ALQA), 158–178 (LFGP…LFGI), 193–213 (GLSY…AVFL), 237–257 (WYGL…AVVV), 280–300 (LVAL…SGAF), 328–348 (IYIG…TLGF), 354–374 (LAAA…ILMF), 385–405 (LAAS…FVSA), and 410–430 (VLEG…LMMT).

It belongs to the HAK/KUP transporter (TC 2.A.72) family.

It localises to the cell inner membrane. It carries out the reaction K(+)(in) + H(+)(in) = K(+)(out) + H(+)(out). Transport of potassium into the cell. Likely operates as a K(+):H(+) symporter. This Bradyrhizobium sp. (strain BTAi1 / ATCC BAA-1182) protein is Probable potassium transport system protein Kup 1.